We begin with the raw amino-acid sequence, 406 residues long: Argininosuccinate synthase (406 aa).

ATP contacts are provided by residues 10–18 (AYSGGLDTS) and alanine 37. L-citrulline contacts are provided by tyrosine 88 and serine 93. Glycine 118 provides a ligand contact to ATP. 3 residues coordinate L-aspartate: threonine 120, asparagine 124, and aspartate 125. An L-citrulline-binding site is contributed by asparagine 124. L-citrulline is bound by residues arginine 128, serine 179, serine 188, glutamate 264, and tyrosine 276.

This sequence belongs to the argininosuccinate synthase family. Type 1 subfamily. In terms of assembly, homotetramer.

It localises to the cytoplasm. It carries out the reaction L-citrulline + L-aspartate + ATP = 2-(N(omega)-L-arginino)succinate + AMP + diphosphate + H(+). It functions in the pathway amino-acid biosynthesis; L-arginine biosynthesis; L-arginine from L-ornithine and carbamoyl phosphate: step 2/3. This Roseobacter denitrificans (strain ATCC 33942 / OCh 114) (Erythrobacter sp. (strain OCh 114)) protein is Argininosuccinate synthase.